The following is a 145-amino-acid chain: UPF0310 protein PH1033 (145 aa).

Belongs to the UPF0310 family.

The sequence is that of UPF0310 protein PH1033 from Pyrococcus horikoshii (strain ATCC 700860 / DSM 12428 / JCM 9974 / NBRC 100139 / OT-3).